Reading from the N-terminus, the 227-residue chain is MPIKAILTDIEGTTSAVSFVFDVLFPFARKHLPAFVREHAEQPAVAQQLQAVRDLAGEPDADVERVIALLLEWIAEDRKATPLKALQGMVWEQGYNAGQLKGHVYPDAVDALKHWHQQGYRLYVYSSGSIQAQQLIFGCSEAGDLSGLFSGYFDTTSGPKREAQSYRTIAQAMDCPAGDILFLSDIVEELDAAQAAGMATCGLARDGGALAGHRYVTSFALIDPASF.

Belongs to the HAD-like hydrolase superfamily. MasA/MtnC family. As to quaternary structure, monomer. Requires Mg(2+) as cofactor.

It carries out the reaction 5-methylsulfanyl-2,3-dioxopentyl phosphate + H2O = 1,2-dihydroxy-5-(methylsulfanyl)pent-1-en-3-one + phosphate. The protein operates within amino-acid biosynthesis; L-methionine biosynthesis via salvage pathway; L-methionine from S-methyl-5-thio-alpha-D-ribose 1-phosphate: step 3/6. Its pathway is amino-acid biosynthesis; L-methionine biosynthesis via salvage pathway; L-methionine from S-methyl-5-thio-alpha-D-ribose 1-phosphate: step 4/6. Bifunctional enzyme that catalyzes the enolization of 2,3-diketo-5-methylthiopentyl-1-phosphate (DK-MTP-1-P) into the intermediate 2-hydroxy-3-keto-5-methylthiopentenyl-1-phosphate (HK-MTPenyl-1-P), which is then dephosphorylated to form the acireductone 1,2-dihydroxy-3-keto-5-methylthiopentene (DHK-MTPene). The polypeptide is Enolase-phosphatase E1 (Pseudomonas syringae pv. syringae (strain B728a)).